The chain runs to 124 residues: Large ribosomal subunit protein bL12 (124 aa).

Belongs to the bacterial ribosomal protein bL12 family. As to quaternary structure, homodimer. Part of the ribosomal stalk of the 50S ribosomal subunit. Forms a multimeric L10(L12)X complex, where L10 forms an elongated spine to which 2 to 4 L12 dimers bind in a sequential fashion. Binds GTP-bound translation factors.

Forms part of the ribosomal stalk which helps the ribosome interact with GTP-bound translation factors. Is thus essential for accurate translation. This chain is Large ribosomal subunit protein bL12, found in Xanthobacter autotrophicus (strain ATCC BAA-1158 / Py2).